The following is a 123-amino-acid chain: Immunoglobulin lambda variable 9-49 (123 aa).

The N-terminal stretch at 1-19 (MAWAPLLLTLLSLLTGSLS) is a signal peptide. The tract at residues 20 to 44 (QPVLTQPPSASASLGASVTLTCTLS) is framework-1. Positions 21–123 (PVLTQPPSAS…ADHGSGSNFV (103 aa)) constitute an Ig-like domain. Cys41 and Cys112 form a disulfide bridge. The complementarity-determining-1 stretch occupies residues 45–51 (SGYSNYK). A framework-2 region spans residues 52-68 (VDWYQQRPGKGPRFVMR). The interval 69–76 (VGTGGIVG) is complementarity-determining-2. The segment at 77–112 (SKGDGIPDRFSVLGSGLNRYLTIKNIQEEDESDYHC) is framework-3. Tyr96 is modified (phosphotyrosine). Phosphothreonine is present on Thr98. A complementarity-determining-3 region spans residues 113–123 (GADHGSGSNFV).

As to quaternary structure, immunoglobulins are composed of two identical heavy chains and two identical light chains; disulfide-linked.

Its subcellular location is the secreted. The protein localises to the cell membrane. In terms of biological role, v region of the variable domain of immunoglobulin light chains that participates in the antigen recognition. Immunoglobulins, also known as antibodies, are membrane-bound or secreted glycoproteins produced by B lymphocytes. In the recognition phase of humoral immunity, the membrane-bound immunoglobulins serve as receptors which, upon binding of a specific antigen, trigger the clonal expansion and differentiation of B lymphocytes into immunoglobulins-secreting plasma cells. Secreted immunoglobulins mediate the effector phase of humoral immunity, which results in the elimination of bound antigens. The antigen binding site is formed by the variable domain of one heavy chain, together with that of its associated light chain. Thus, each immunoglobulin has two antigen binding sites with remarkable affinity for a particular antigen. The variable domains are assembled by a process called V-(D)-J rearrangement and can then be subjected to somatic hypermutations which, after exposure to antigen and selection, allow affinity maturation for a particular antigen. The sequence is that of Immunoglobulin lambda variable 9-49 from Homo sapiens (Human).